The primary structure comprises 137 residues: Large ribosomal subunit protein uL16 (137 aa).

Belongs to the universal ribosomal protein uL16 family. In terms of assembly, part of the 50S ribosomal subunit.

Its function is as follows. Binds 23S rRNA and is also seen to make contacts with the A and possibly P site tRNAs. The polypeptide is Large ribosomal subunit protein uL16 (Stenotrophomonas maltophilia (strain K279a)).